The following is a 379-amino-acid chain: Epoxyqueuosine reductase (379 aa).

Asp-139 (proton donor) is an active-site residue. Positions 181–213 (IPLPVDQPVEEGCGKCVACMTICPTGAIVEPYT) constitute a 4Fe-4S ferredoxin-type domain. Positions 193, 196, 199, 203, 219, 246, 249, and 253 each coordinate [4Fe-4S] cluster.

The protein belongs to the QueG family. Monomer. Cob(II)alamin is required as a cofactor. The cofactor is [4Fe-4S] cluster.

The protein resides in the cytoplasm. The catalysed reaction is epoxyqueuosine(34) in tRNA + AH2 = queuosine(34) in tRNA + A + H2O. Its pathway is tRNA modification; tRNA-queuosine biosynthesis. Catalyzes the conversion of epoxyqueuosine (oQ) to queuosine (Q), which is a hypermodified base found in the wobble positions of tRNA(Asp), tRNA(Asn), tRNA(His) and tRNA(Tyr). This chain is Epoxyqueuosine reductase, found in Shigella dysenteriae serotype 1 (strain Sd197).